Here is a 318-residue protein sequence, read N- to C-terminus: Probable pyridoxal 5'-phosphate synthase subunit PDX1.1 (318 aa).

D49 serves as a coordination point for D-ribose 5-phosphate. K106 acts as the Schiff-base intermediate with D-ribose 5-phosphate in catalysis. D-ribose 5-phosphate is bound at residue G178. R190 serves as a coordination point for D-glyceraldehyde 3-phosphate. D-ribose 5-phosphate contacts are provided by residues G239 and 260 to 261 (GS).

Belongs to the PdxS/SNZ family.

It carries out the reaction aldehydo-D-ribose 5-phosphate + D-glyceraldehyde 3-phosphate + L-glutamine = pyridoxal 5'-phosphate + L-glutamate + phosphate + 3 H2O + H(+). It functions in the pathway cofactor biosynthesis; pyridoxal 5'-phosphate biosynthesis. In terms of biological role, catalyzes the formation of pyridoxal 5'-phosphate from ribose 5-phosphate (RBP), glyceraldehyde 3-phosphate (G3P) and ammonia. The ammonia is provided by PDX2. Can also use ribulose 5-phosphate and dihydroxyacetone phosphate as substrates, resulting from enzyme-catalyzed isomerization of RBP and G3P, respectively. Also plays an indirect role in resistance to singlet oxygen-generating photosensitizers. This chain is Probable pyridoxal 5'-phosphate synthase subunit PDX1.1 (PDX11), found in Oryza sativa subsp. japonica (Rice).